We begin with the raw amino-acid sequence, 245 residues long: MNPKSNPDTIFSAPIDKIGDFTFDERVAEVFPDMIQRSVPGYSNIISAIGMLAERFVKPHSNIYDLGCSLGAATLSMRRHIKQEGCKIIAVDNSPAMVERCKLHVNAYRSDTPVTVVEADIRNIEIENASVVVLNFTLQFLSPEDRYALLEKIYAGLRPGGILILSEKFVFEDEVSNELLIDLHHDFKRANGYSELEISQKRSAIENVMRPDSKKDHKERFAKIGFSSYDVWFQCFNFGSMFAIK.

S-adenosyl-L-methionine is bound by residues Tyr42, 67 to 69 (GCS), 92 to 93 (DN), 120 to 121 (DI), Asn135, and Arg202.

Belongs to the class I-like SAM-binding methyltransferase superfamily. Cx-SAM synthase family. In terms of assembly, homodimer.

The enzyme catalyses prephenate + S-adenosyl-L-methionine = carboxy-S-adenosyl-L-methionine + 3-phenylpyruvate + H2O. In terms of biological role, catalyzes the conversion of S-adenosyl-L-methionine (SAM) to carboxy-S-adenosyl-L-methionine (Cx-SAM). In Vibrio parahaemolyticus serotype O3:K6 (strain RIMD 2210633), this protein is Carboxy-S-adenosyl-L-methionine synthase.